A 348-amino-acid chain; its full sequence is Dihydroorotase (348 aa).

Residues His-14 and His-16 each coordinate Zn(2+). Residues His-16–Arg-18 and Asn-42 each bind substrate. The Zn(2+) site is built by Lys-100, His-137, and His-175. The residue at position 100 (Lys-100) is an N6-carboxylysine. His-137 lines the substrate pocket. Leu-220 provides a ligand contact to substrate. Position 248 (Asp-248) interacts with Zn(2+). Asp-248 is an active-site residue. Residues His-252 and Ala-264 each contribute to the substrate site.

The protein belongs to the metallo-dependent hydrolases superfamily. DHOase family. Class II DHOase subfamily. In terms of assembly, homodimer. Zn(2+) serves as cofactor.

It catalyses the reaction (S)-dihydroorotate + H2O = N-carbamoyl-L-aspartate + H(+). Its pathway is pyrimidine metabolism; UMP biosynthesis via de novo pathway; (S)-dihydroorotate from bicarbonate: step 3/3. Its function is as follows. Catalyzes the reversible cyclization of carbamoyl aspartate to dihydroorotate. The sequence is that of Dihydroorotase from Azotobacter vinelandii (strain DJ / ATCC BAA-1303).